A 136-amino-acid polypeptide reads, in one-letter code: Putative pre-16S rRNA nuclease (136 aa).

It belongs to the YqgF nuclease family.

It localises to the cytoplasm. Its function is as follows. Could be a nuclease involved in processing of the 5'-end of pre-16S rRNA. The sequence is that of Putative pre-16S rRNA nuclease from Francisella tularensis subsp. holarctica (strain FTNF002-00 / FTA).